A 622-amino-acid polypeptide reads, in one-letter code: SLAIN motif-containing protein-like (622 aa).

Residues 34 to 60 (DLKEVQKLHELVKRLEIQNQQLKIKRN) are a coiled coil. 2 disordered regions span residues 404–441 (HRYS…IQNH) and 473–622 (VRSS…DGCY). Residues 405-415 (RYSPSPLSSPR) are compositionally biased toward low complexity. Polar residues-rich tracts occupy residues 416-430 (CQSP…TTSR), 484-502 (QGPS…STPP), 525-591 (VSTS…STVP), and 599-611 (SRRS…MNST).

This sequence belongs to the SLAIN motif-containing family.

The sequence is that of SLAIN motif-containing protein-like from Xenopus tropicalis (Western clawed frog).